The primary structure comprises 1139 residues: Integrin alpha ina-1 (1139 aa).

Positions 1–19 (MRECIISWTLLLCLSCVKS) are cleaved as a signal peptide. The Extracellular portion of the chain corresponds to 20–1084 (FNLDVNAPIY…PTIGDSRPIP (1065 aa)). An FG-GAP 1 repeat occupies 21-85 (NLDVNAPIYR…CDINTFYNGG (65 aa)). Asn-108 and Asn-136 each carry an N-linked (GlcNAc...) asparagine glycan. FG-GAP repeat units follow at residues 111–171 (RGRT…LQST), 180–231 (LPTT…IFDS), 242–302 (NGDM…SSSK), 307–370 (EDKF…QRKQ), 378–438 (HPPK…IEKF), and 448–510 (GNDL…MEKR). Asn-313 carries an N-linked (GlcNAc...) asparagine glycan. N-linked (GlcNAc...) asparagine glycosylation is found at Asn-580, Asn-788, Asn-851, and Asn-1026. The chain crosses the membrane as a helical span at residues 1085–1106 (WWIYVIAAVIGVLILSLIIICL). The Cytoplasmic segment spans residues 1107-1139 (SKCGFFKRNRLDQPSLYTAQLKHEREEWADTGL).

This sequence belongs to the integrin alpha chain family. Heterodimer of an alpha and a beta subunit. Alpha ina-1 associates with beta pat-3. Interacts (via cytoplasmic domain) with src-1 (when phosphorylated at 'Tyr-416').

Its subcellular location is the membrane. It is found in the cell projection. The protein localises to the phagocytic cup. It localises to the cytoplasmic vesicle. The protein resides in the phagosome membrane. In terms of biological role, plays a role in cell migration, axon fasciculation, and morphogenesis. During gonad morphogenesis, involved in distal tip cell (DTC)-mediated guidance of gonad elongation, in maintaining their sharp tapering morphology and in their migration. Involved in the anterior-posterior positioning of QR neuroblast descendants by regulating the migratory speed of QR.p. Probably by acting as a receptor for apoptotic cells, plays a role in the clearance of apoptotic cells during mid-embryogenesis. The polypeptide is Integrin alpha ina-1 (ina-1) (Caenorhabditis elegans).